Consider the following 138-residue polypeptide: Large ribosomal subunit protein uL14 (138 aa).

Belongs to the universal ribosomal protein uL14 family. As to quaternary structure, part of the 50S ribosomal subunit. Forms a cluster with proteins L3 and L24e, part of which may contact the 16S rRNA in 2 intersubunit bridges.

Functionally, binds to 23S rRNA. Forms part of two intersubunit bridges in the 70S ribosome. The polypeptide is Large ribosomal subunit protein uL14 (Metallosphaera sedula (strain ATCC 51363 / DSM 5348 / JCM 9185 / NBRC 15509 / TH2)).